Here is a 529-residue protein sequence, read N- to C-terminus: DEP domain-containing protein 1B (529 aa).

Residues 24–108 enclose the DEP domain; it reads FRAKMPLRKH…DNRHLYRFPP (85 aa). At S160 the chain carries Phosphoserine. Residues 201 to 393 enclose the Rho-GAP domain; that stretch reads DSLEEVLDVK…FLMDNYQEIL (193 aa). A Phosphoserine modification is found at S436.

This is DEP domain-containing protein 1B (DEPDC1B) from Homo sapiens (Human).